The primary structure comprises 213 residues: Histone H1 (213 aa).

Positions 1-25 are enriched in low complexity; the sequence is MAAATASAAATPAKKAAPKKPAAAP. Disordered stretches follow at residues 1–30 and 81–213; these read MAAATASAAATPAKKAAPKKPAAAPEHPSY and GEFV…AKSS. One can recognise an H15 domain in the interval 26-97; it reads EHPSYKEMLT…GPSGTVKLAK (72 aa). Composition is skewed to low complexity over residues 102–113, 123–137, 157–176, and 203–213; these read AAAPKKPAAKKA, KKAAAPKKAAAPKSA, KKAAAPKKVAAPVEKPAPVK, and PKKAATPAKSS.

The protein belongs to the histone H1/H5 family.

The protein localises to the nucleus. It localises to the chromosome. In terms of biological role, could act as an H1-type linker histone. The chain is Histone H1 from Ascobolus immersus.